Here is a 292-residue protein sequence, read N- to C-terminus: MGADLPPKFQYAFRRCLFYTFVLVAWLFIGMILFPALCTPAVKQDDNEAGIFRLDAKRSDLLNVLWAETITNGEDDWSELADQKLELYEKALLQHYGIDLDKSDKSFASGLQKSFAISTTIGPLDVDDFTTLGKLIAVLYALIGTPLFLTVIGQLGKMVTSVWQGTTLWIVTIVYIFISAVIYDIVEGGSDDVPFIEAIFSIFLQFTTVGEVDNEFHGVLPYCIVVLGLALITALYQEMQHNIERFIHPFEYSFNRLCGNVERWAGEKSEDKKSIVTSRIEEENEDEISDYE.

The next 4 membrane-spanning stretches (helical) occupy residues 17–37, 135–155, 166–186, and 216–236; these read LFYT…FPAL, LIAV…IGQL, TTLW…YDIV, and FHGV…TALY. The interval 267 to 292 is disordered; the sequence is EKSEDKKSIVTSRIEEENEDEISDYE. Positions 282 to 292 are enriched in acidic residues; sequence EENEDEISDYE.

It is found in the membrane. This is an uncharacterized protein from Caenorhabditis elegans.